Here is a 302-residue protein sequence, read N- to C-terminus: Phytoene synthase (302 aa).

Belongs to the phytoene/squalene synthase family. Requires ATP as cofactor. It depends on Mn(2+) as a cofactor. The cofactor is Mg(2+).

It functions in the pathway carotenoid biosynthesis; phytoene biosynthesis. Involved in the biosynthesis of carotenoids. Catalyzes the condensation of two molecules of geranylgeranyl diphosphate (GGPP) to give prephytoene diphosphate (PPPP) and the subsequent rearrangement of the cyclopropylcarbinyl intermediate to yield phytoene. The protein is Phytoene synthase (crtB) of Mycobacterium bovis (strain ATCC BAA-935 / AF2122/97).